A 473-amino-acid chain; its full sequence is Glutamate--tRNA ligase 2 (473 aa).

The 'HIGH' region motif lies at 11–21 (PSPTGYLHIGG). A compositionally biased stretch (basic and acidic residues) spans 113–133 (KARAEGRPPRYDGRWRDRDPS). Residues 113-136 (KARAEGRPPRYDGRWRDRDPSEAP) are disordered. Positions 240–244 (KLSKR) match the 'KMSKS' region motif. Position 243 (lysine 243) interacts with ATP.

It belongs to the class-I aminoacyl-tRNA synthetase family. Glutamate--tRNA ligase type 1 subfamily. In terms of assembly, monomer.

The protein resides in the cytoplasm. It catalyses the reaction tRNA(Glu) + L-glutamate + ATP = L-glutamyl-tRNA(Glu) + AMP + diphosphate. In terms of biological role, catalyzes the attachment of glutamate to tRNA(Glu) in a two-step reaction: glutamate is first activated by ATP to form Glu-AMP and then transferred to the acceptor end of tRNA(Glu). The chain is Glutamate--tRNA ligase 2 from Brucella canis (strain ATCC 23365 / NCTC 10854 / RM-666).